A 362-amino-acid chain; its full sequence is Phosphoserine aminotransferase (362 aa).

L-glutamate is bound by residues Ser-9 and Arg-42. Residues 76-77 (GR), Trp-102, Thr-153, Asp-174, and Gln-197 contribute to the pyridoxal 5'-phosphate site. The residue at position 198 (Lys-198) is an N6-(pyridoxal phosphate)lysine. 239–240 (NT) is a binding site for pyridoxal 5'-phosphate.

It belongs to the class-V pyridoxal-phosphate-dependent aminotransferase family. SerC subfamily. As to quaternary structure, homodimer. Requires pyridoxal 5'-phosphate as cofactor.

It is found in the cytoplasm. The catalysed reaction is O-phospho-L-serine + 2-oxoglutarate = 3-phosphooxypyruvate + L-glutamate. It catalyses the reaction 4-(phosphooxy)-L-threonine + 2-oxoglutarate = (R)-3-hydroxy-2-oxo-4-phosphooxybutanoate + L-glutamate. It participates in amino-acid biosynthesis; L-serine biosynthesis; L-serine from 3-phospho-D-glycerate: step 2/3. Its pathway is cofactor biosynthesis; pyridoxine 5'-phosphate biosynthesis; pyridoxine 5'-phosphate from D-erythrose 4-phosphate: step 3/5. Its function is as follows. Catalyzes the reversible conversion of 3-phosphohydroxypyruvate to phosphoserine and of 3-hydroxy-2-oxo-4-phosphonooxybutanoate to phosphohydroxythreonine. The sequence is that of Phosphoserine aminotransferase from Shigella dysenteriae serotype 1 (strain Sd197).